The sequence spans 438 residues: UDP-N-acetylmuramoylalanine--D-glutamate ligase (438 aa).

112–118 (GSNGKST) provides a ligand contact to ATP.

The protein belongs to the MurCDEF family.

The protein resides in the cytoplasm. The enzyme catalyses UDP-N-acetyl-alpha-D-muramoyl-L-alanine + D-glutamate + ATP = UDP-N-acetyl-alpha-D-muramoyl-L-alanyl-D-glutamate + ADP + phosphate + H(+). It functions in the pathway cell wall biogenesis; peptidoglycan biosynthesis. In terms of biological role, cell wall formation. Catalyzes the addition of glutamate to the nucleotide precursor UDP-N-acetylmuramoyl-L-alanine (UMA). This Escherichia coli O6:K15:H31 (strain 536 / UPEC) protein is UDP-N-acetylmuramoylalanine--D-glutamate ligase.